The sequence spans 110 residues: Mobility group protein 1B (110 aa).

The segment at residues 5–71 (PKRPLSAYML…NYIRALQEYE (67 aa)) is a DNA-binding region (HMG box). Basic and acidic residues predominate over residues 71 to 81 (ERNGGGGDDKG). The tract at residues 71–110 (ERNGGGGDDKGKKRKGAAPKKGAGKKSKKGAHSDDDGDSE) is disordered. Residues 82–100 (KKRKGAAPKKGAGKKSKKG) are compositionally biased toward basic residues.

The protein belongs to the HMGB family.

Its subcellular location is the nucleus. It is found in the chromosome. Functionally, found in condensed chromomeres. Binds preferentially to AT-rich DNA. The sequence is that of Mobility group protein 1B (HMG1B) from Chironomus tentans (Midge).